Consider the following 534-residue polypeptide: Pentatricopeptide repeat-containing protein At5g50990 (534 aa).

6 PPR repeats span residues 128–158, 164–198, 199–229, 230–264, 265–295, and 301–331; these read NVITWNLMIGGYVRNVQYEEALKALKNMLSF, NKFSFASSLAACARLGDLHHAKWVHSLMIDSGIEL, NAILSSALVDVYAKCGDIGTSREVFYSVKRN, DVSIWNAMITGFATHGLATEAIRVFSEMEAEHVSP, DSITFLGLLTTCSHCGLLEEGKEYFGLMSRR, and KLEHYGAMVDLLGRAGRVKEAYELIESMPIE. The interval 336–408 is type E motif; sequence IWRSLLSSSR…AKGKSWLEFG (73 aa). Positions 409 to 439 are type E(+) motif; it reads GMIHRFKAGDTSHIETKAIYKVLEGLIQKTK. A type DYW motif region spans residues 440 to 534; that stretch reads SQGFVSDTDL…DGLCSCRDYW (95 aa).

It belongs to the PPR family. PCMP-H subfamily.

The sequence is that of Pentatricopeptide repeat-containing protein At5g50990 (PCMP-H59) from Arabidopsis thaliana (Mouse-ear cress).